The primary structure comprises 640 residues: RecBCD enzyme subunit RecD (640 aa).

G194–T201 contributes to the ATP binding site.

This sequence belongs to the RecD family. Heterotrimer of RecB, RecC and RecD. All subunits contribute to DNA-binding.

The catalysed reaction is Couples ATP hydrolysis with the unwinding of duplex DNA at the replication fork by translocating in the 5'-3' direction. This creates two antiparallel DNA single strands (ssDNA). The leading ssDNA polymer is the template for DNA polymerase III holoenzyme which synthesizes a continuous strand.. It catalyses the reaction ATP + H2O = ADP + phosphate + H(+). Its function is as follows. A helicase/nuclease that prepares dsDNA breaks (DSB) for recombinational DNA repair. Binds to DSBs and unwinds DNA via a highly rapid and processive ATP-dependent bidirectional helicase activity. Unwinds dsDNA until it encounters a Chi (crossover hotspot instigator) sequence from the 3' direction. Cuts ssDNA a few nucleotides 3' to the Chi site. The properties and activities of the enzyme are changed at Chi. The Chi-altered holoenzyme produces a long 3'-ssDNA overhang and facilitates RecA-binding to the ssDNA for homologous DNA recombination and repair. Holoenzyme degrades any linearized DNA that is unable to undergo homologous recombination. In the holoenzyme this subunit has ssDNA-dependent ATPase and 5'-3' helicase activity. When added to pre-assembled RecBC greatly stimulates nuclease activity and augments holoenzyme processivity. Negatively regulates the RecA-loading ability of RecBCD. This is RecBCD enzyme subunit RecD from Haemophilus influenzae (strain ATCC 51907 / DSM 11121 / KW20 / Rd).